Reading from the N-terminus, the 621-residue chain is F-box/LRR-repeat protein 4 (621 aa).

Arg28 bears the Asymmetric dimethylarginine mark. One can recognise an F-box domain in the interval 277-332 (NGYFDKLPYELIQLILNHLTLPDLCRLAQTCKLLSQHCCDPLQYIHLNLQPYWAKL). LRR repeat units lie at residues 376-397 (ELVR…EVIS), 402-421 (NLQA…AFNH), 427-448 (SLKR…SILN), 452-474 (ELQH…ASMI), 480-501 (KLRT…AELA), 504-524 (CPLL…STGC), 532-558 (LPNL…ACNC), 559-583 (TRLQ…LLES), and 584-609 (CKDL…LNAS).

Part of a SCF (SKP1-CUL1-F-box) protein ligase complex. Interacts with VCP. Interacts with PPTC7; this interaction promotes destruction of BNIP3 and NIX and mitophagy suppression. Expressed in heart, kidney, liver, lung, pancreas, and placenta, but not in skeletal muscle.

It is found in the cytoplasm. Its subcellular location is the nucleus. It localises to the mitochondrion outer membrane. In terms of biological role, substrate-recognition component of the mitochondria-localized SCF-FBXL4 ubiquitin E3 ligase complex that plays a role in the restriction of mitophagy by controlling the degradation of BNIP3 and NIX mitophagy receptors. Rescues also mitochondrial injury through reverting hyperactivation of DRP1-mediated mitochondrial fission. This Homo sapiens (Human) protein is F-box/LRR-repeat protein 4 (FBXL4).